The following is a 276-amino-acid chain: Odontogenic ameloblast-associated protein (276 aa).

The signal sequence occupies residues M1–S15. T101, T113, and T117 each carry an O-linked (GalNAc...) threonine glycan. The segment at M125–S127 is interaction with ARHGEF5. S246 carries O-linked (GalNAc...) serine glycosylation. O-linked (GalNAc...) threonine glycans are attached at residues T247, T248, and T252. O-linked (GalNAc...) serine glycosylation is present at S253. O-linked (GalNAc...) threonine glycans are attached at residues T254, T258, T260, and T270. S272 carries O-linked (GalNAc...) serine glycosylation.

This sequence belongs to the ODAM family. As to quaternary structure, interacts (via C-terminus) with ARHGEF5. O-glycosylated.

The protein resides in the secreted. The protein localises to the cytoplasm. Its subcellular location is the nucleus. Its function is as follows. Tooth-associated epithelia protein that probably plays a role in odontogenesis, the complex process that results in the initiation and generation of the tooth. May be incorporated in the enamel matrix at the end of mineralization process. Involved in the induction of RHOA activity via interaction with ARHGEF and expression of downstream factors such as ROCK. Plays a role in attachment of the junctional epithelium to the tooth surface. This Sus scrofa (Pig) protein is Odontogenic ameloblast-associated protein (ODAM).